A 511-amino-acid chain; its full sequence is Cytochrome P450 89A9 (511 aa).

The chain crosses the membrane as a helical; Signal-anchor for type II membrane protein span at residues 6-26; the sequence is IIFLIISSLTFSIFLKLIFFF. A heme-binding site is contributed by Cys-454.

The protein belongs to the cytochrome P450 family. Requires heme as cofactor.

It is found in the endoplasmic reticulum membrane. It catalyses the reaction primary fluorescent chlorophyll catabolite + reduced [NADPH--hemoprotein reductase] + O2 = primary fluorescent dioxobilin-type chlorophyll catabolite + formate + oxidized [NADPH--hemoprotein reductase] + 2 H(+). It functions in the pathway porphyrin-containing compound metabolism; chlorophyll degradation. Involved in the chlorophyll breakdown by its action in nonpolar primary fluorescent chlorophyll catabolite (pFCC) decarbonylation. Involved in the formation of major chlorophyll breakdown products, including non-fluorescent dioxobilin-type chlorophyll catabolites (NDCCs), during leaf senescence. This is Cytochrome P450 89A9 from Arabidopsis thaliana (Mouse-ear cress).